The primary structure comprises 334 residues: tRNA N6-adenosine threonylcarbamoyltransferase (334 aa).

Positions 110 and 114 each coordinate Fe cation. Substrate-binding positions include 133 to 137, aspartate 166, glycine 179, aspartate 183, and asparagine 275; that span reads IVSGG. Aspartate 303 contacts Fe cation.

The protein belongs to the KAE1 / TsaD family. Requires Fe(2+) as cofactor.

Its subcellular location is the cytoplasm. It carries out the reaction L-threonylcarbamoyladenylate + adenosine(37) in tRNA = N(6)-L-threonylcarbamoyladenosine(37) in tRNA + AMP + H(+). Functionally, required for the formation of a threonylcarbamoyl group on adenosine at position 37 (t(6)A37) in tRNAs that read codons beginning with adenine. Is involved in the transfer of the threonylcarbamoyl moiety of threonylcarbamoyl-AMP (TC-AMP) to the N6 group of A37, together with TsaE and TsaB. TsaD likely plays a direct catalytic role in this reaction. This is tRNA N6-adenosine threonylcarbamoyltransferase from Salinibacter ruber (strain DSM 13855 / M31).